Reading from the N-terminus, the 194-residue chain is Probable calcium-binding protein CML45 (194 aa).

A compositionally biased stretch (basic and acidic residues) spans 52–63; it reads NNKDQQETLTKQ. The disordered stretch occupies residues 52 to 81; sequence NNKDQQETLTKQEDDDDDDDDDDDDDDDDI. Over residues 64–81 the composition is skewed to acidic residues; the sequence is EDDDDDDDDDDDDDDDDI. EF-hand domains are found at residues 76–98, 122–157, and 160–194; these read DDDDDIDISREEAEMVMRSLGLF, ASLEEVKQAFDVFDENKDGFIDAIELQRVLTILGFK, and SYLDNCLVMIRSLDGNKDGKIDFNEFVKFMETSFY. Ca(2+) is bound by residues aspartate 135, asparagine 137, aspartate 139, glutamate 146, aspartate 173, asparagine 175, aspartate 177, lysine 179, and glutamate 184.

Potential calcium sensor. This is Probable calcium-binding protein CML45 from Arabidopsis thaliana (Mouse-ear cress).